Consider the following 196-residue polypeptide: Phosphoheptose isomerase (196 aa).

The SIS domain occupies 36–196; that stretch reads MAQALQAEGK…LIDQHLFGGA (161 aa). 51–53 lines the substrate pocket; the sequence is NGG. The Zn(2+) site is built by His-60 and Glu-64. Substrate contacts are provided by residues Glu-64, 93–94, 119–121, Ser-124, and Gln-174; these read ND and STS. Residues Gln-174 and His-182 each coordinate Zn(2+).

This sequence belongs to the SIS family. GmhA subfamily. In terms of assembly, homotetramer. The cofactor is Zn(2+).

The protein localises to the cytoplasm. It carries out the reaction 2 D-sedoheptulose 7-phosphate = D-glycero-alpha-D-manno-heptose 7-phosphate + D-glycero-beta-D-manno-heptose 7-phosphate. The protein operates within carbohydrate biosynthesis; D-glycero-D-manno-heptose 7-phosphate biosynthesis; D-glycero-alpha-D-manno-heptose 7-phosphate and D-glycero-beta-D-manno-heptose 7-phosphate from sedoheptulose 7-phosphate: step 1/1. In terms of biological role, catalyzes the isomerization of sedoheptulose 7-phosphate in D-glycero-D-manno-heptose 7-phosphate. This is Phosphoheptose isomerase from Alkalilimnicola ehrlichii (strain ATCC BAA-1101 / DSM 17681 / MLHE-1).